Reading from the N-terminus, the 2376-residue chain is Reducing polyketide synthase DEP5 (2376 aa).

Residues 47-477 (LEPIAVVGMG…GTNAHTIIES (431 aa)) form the Ketosynthase family 3 (KS3) domain. Active-site for beta-ketoacyl synthase activity residues include Cys-221, His-358, and His-399. The interval 593–906 (VFTGQGAQWA…QYLPTLVRGF (314 aa)) is malonyl-CoA:ACP transacylase (MAT) domain. Catalysis depends on Ser-685, which acts as the For malonyltransferase activity. Residues 983–1121 (HDVLGQLTTG…GSIAIRTSAR (139 aa)) are N-terminal hotdog fold. A dehydratase (DH) domain region spans residues 983–1158 (HDVLGQLTTG…FNYGPTFQDM (176 aa)). One can recognise a PKS/mFAS DH domain in the interval 983 to 1286 (HDVLGQLTTG…CIAYEAAIPQ (304 aa)). Catalysis depends on His-1015, which acts as the Proton acceptor; for dehydratase activity. The tract at residues 1131–1286 (LPQRASGRLW…CIAYEAAIPQ (156 aa)) is C-terminal hotdog fold. Asp-1195 serves as the catalytic Proton donor; for dehydratase activity. The segment at 1659–1964 (GRIQAGKVVF…DSICDNKIVI (306 aa)) is enoyl reductase (ER) domain. The ketoreductase (KR) domain stretch occupies residues 1988-2163 (ATYLLVGCLG…KPACAVVLPM (176 aa)). Residues 2289 to 2368 (DLVRDHFIAK…KFSELVCGAQ (80 aa)) enclose the Carrier domain. At Ser-2327 the chain carries O-(pantetheine 4'-phosphoryl)serine.

Its pathway is polyketide biosynthesis. Functionally, reducing polyketide synthase; part of the gene cluster that mediates the biosynthesis of depudecin, a highly oxidized eleven-carbon linear polyketide that acts as a histone deacetylase (HDAC) inhibitor and makes a small contribution to pathogenesis. The reducing polyketide synthase DEP5 is the central enzyme in depudecin biosynthesis by yielding the backbone polyketide chain. The monooxygenases DEP2 and DEP4, as well as the uncharacterized protein DEP1, then act as tailoring enzymes to modify the intermediate polyketide chain into depudecin. The protein is Reducing polyketide synthase DEP5 of Alternaria brassicicola (Dark leaf spot agent).